A 336-amino-acid chain; its full sequence is Eukaryotic translation initiation factor 3 subunit I (336 aa).

5 WD repeats span residues 8 to 47 (GHER…RLGT), 50 to 91 (GHLG…KVWE), 146 to 185 (CNES…QLEN), 190 to 229 (EFDH…ILKT), and 287 to 326 (GHFG…FDFM).

The protein belongs to the eIF-3 subunit I family. In terms of assembly, component of the eukaryotic translation initiation factor 3 (eIF-3) complex.

It localises to the cytoplasm. Component of the eukaryotic translation initiation factor 3 (eIF-3) complex, which is involved in protein synthesis of a specialized repertoire of mRNAs and, together with other initiation factors, stimulates binding of mRNA and methionyl-tRNAi to the 40S ribosome. The eIF-3 complex specifically targets and initiates translation of a subset of mRNAs involved in cell proliferation. This Aspergillus terreus (strain NIH 2624 / FGSC A1156) protein is Eukaryotic translation initiation factor 3 subunit I (tif34).